Here is a 273-residue protein sequence, read N- to C-terminus: DNA repair protein RecO (273 aa).

The segment at 250-273 (NVGQNPSGKDDLNERRDVDGTGES) is disordered. Positions 257 to 273 (GKDDLNERRDVDGTGES) are enriched in basic and acidic residues.

It belongs to the RecO family.

Its function is as follows. Involved in DNA repair and RecF pathway recombination. In Desulfitobacterium hafniense (strain DSM 10664 / DCB-2), this protein is DNA repair protein RecO.